Here is a 133-residue protein sequence, read N- to C-terminus: Small ribosomal subunit protein uS8 (133 aa).

This sequence belongs to the universal ribosomal protein uS8 family. As to quaternary structure, part of the 30S ribosomal subunit. Contacts proteins S5 and S12.

In terms of biological role, one of the primary rRNA binding proteins, it binds directly to 16S rRNA central domain where it helps coordinate assembly of the platform of the 30S subunit. This is Small ribosomal subunit protein uS8 from Chlamydia felis (strain Fe/C-56) (Chlamydophila felis).